A 249-amino-acid chain; its full sequence is Fasciclin-like arabinogalactan protein 12 (249 aa).

Positions M1–S24 are cleaved as a signal peptide. In terms of domain architecture, FAS1 spans P37–L181. N-linked (GlcNAc...) asparagine glycans are attached at residues N39, N71, N143, N152, and N159. The disordered stretch occupies residues V186–A219. D220 is lipidated: GPI-anchor amidated aspartate. The propeptide at A221–L249 is removed in mature form.

It belongs to the fasciclin-like AGP family.

The protein localises to the cell membrane. Its function is as follows. May be a cell surface adhesion protein. The chain is Fasciclin-like arabinogalactan protein 12 (FLA12) from Arabidopsis thaliana (Mouse-ear cress).